Consider the following 79-residue polypeptide: Raniseptin-3 (79 aa).

Residues 1–22 (MAFLKKSLFLVLFLGIVSLSIC) form the signal peptide. Residues 23-49 (EEEKREGEEEEKQEEENEELSEEELRE) constitute a propeptide that is removed on maturation.

Belongs to the frog skin active peptide (FSAP) family. Dermaseptin subfamily. As to expression, expressed by the skin glands.

Its subcellular location is the secreted. Its function is as follows. Has antibacterial activity. In Boana raniceps (Chaco tree frog), this protein is Raniseptin-3.